Reading from the N-terminus, the 332-residue chain is Probable sugar phosphate/phosphate translocator At1g53660 (332 aa).

The next 10 helical transmembrane spans lie at 19-39, 46-66, 82-102, 120-140, 143-163, 165-185, 199-219, 233-253, 259-281, and 285-304; these read ASIL…KWVL, FPYP…LCFL, LEIY…TLWL, AIMP…IMSC, LLIM…ELNI, WVGV…LILM, LSLM…PWIF, LVLS…FLVI, LTIR…LLFA, and LTII…ATYN. Polar residues predominate over residues 312–322; that stretch reads ESITLVSQSPK. The disordered stretch occupies residues 312–332; it reads ESITLVSQSPKNSDKKPDGPL. Residues 323–332 are compositionally biased toward basic and acidic residues; the sequence is NSDKKPDGPL.

The protein belongs to the TPT transporter family. TPT (TC 2.A.7.9) subfamily.

Its subcellular location is the membrane. This is Probable sugar phosphate/phosphate translocator At1g53660 from Arabidopsis thaliana (Mouse-ear cress).